The sequence spans 761 residues: Neutral ceramidase (761 aa).

The Cytoplasmic portion of the chain corresponds to 1 to 11 (MAKRTFSSLEA). A helical; Signal-anchor for type II membrane protein membrane pass occupies residues 12–32 (FLIFLLVMMTAITVALLTLLF). Residues 33-761 (VTSGTIENHK…ISSPFEIVTT (729 aa)) are Lumenal-facing. The disordered stretch occupies residues 43 to 76 (DSGNHWVSTTQGPTTTQSSPTTQTPTTQTPDLPP). The span at 50–76 (STTQGPTTTQSSPTTQTPTTQTPDLPP) shows a compositional bias: low complexity. O-linked (GalNAc...) threonine glycans are attached at residues Thr51, Thr52, Thr56, Thr57, and Thr58. Ser60 and Ser61 each carry an O-linked (GalNAc...) serine glycan. O-linked (GalNAc...) threonine glycans are attached at residues Thr63, Thr64, Thr66, Thr68, Thr69, and Thr71. Leu115 is a binding site for Ca(2+). His175 serves as a coordination point for Zn(2+). Residue Asn198 is glycosylated (N-linked (GlcNAc...) asparagine). His284 serves as a coordination point for Zn(2+). Ser335 functions as the Nucleophile in the catalytic mechanism. Cystine bridges form between Cys343-Cys357 and Cys350-Cys365. 2 N-linked (GlcNAc...) asparagine glycosylation sites follow: Asn412 and Asn449. Cys429 and Cys479 are oxidised to a cystine. Zn(2+) is bound by residues Glu521 and Tyr560. Residues Asp693, Ser695, and Thr698 each contribute to the Ca(2+) site. Positions 751–761 (GISSPFEIVTT) are required for correct folding and localization.

It belongs to the neutral ceramidase family. The cofactor is Zn(2+). In terms of processing, proteolytic cleavage of the N-terminus removes the signal-anchor and produces a soluble form of the protein. Post-translationally, N-glycosylated. Required for enzyme activity. O-glycosylated. Required to retain it as a type II membrane protein at the cell surface. In terms of processing, phosphorylated. May prevent ubiquitination and subsequent degradation. Post-translationally, ubiquitinated, leading to its degradation by the proteasome. Ubiquitination is triggered by nitric oxide. Highly expressed in brain, kidney and heart. Expressed at lower level in other tissues such as liver. Expressed in intestine, kidney and liver (at protein level). Localizes in the epithelia of the jejunum and ileum.

It is found in the cell membrane. It localises to the membrane raft. Its subcellular location is the membrane. The protein localises to the caveola. The protein resides in the golgi apparatus membrane. It is found in the mitochondrion. It localises to the secreted. Its subcellular location is the extracellular exosome. It catalyses the reaction an N-acylsphing-4-enine + H2O = sphing-4-enine + a fatty acid. The enzyme catalyses N-hexadecanoylsphing-4-enine + H2O = sphing-4-enine + hexadecanoate. The catalysed reaction is N-tetradecanoylsphing-4-enine + H2O = tetradecanoate + sphing-4-enine. It carries out the reaction N-(9Z-octadecenoyl)-sphing-4-enine + H2O = sphing-4-enine + (9Z)-octadecenoate. It catalyses the reaction N-(15Z-tetracosenoyl)-sphing-4-enine + H2O = (15Z)-tetracosenoate + sphing-4-enine. The enzyme catalyses N-octanoylsphing-4-enine + H2O = octanoate + sphing-4-enine. The catalysed reaction is N-dodecanoylsphing-4-enine + H2O = dodecanoate + sphing-4-enine. It carries out the reaction N-(hexanoyl)sphing-4-enine + H2O = hexanoate + sphing-4-enine. It catalyses the reaction N-octadecanoylsphing-4-enine + H2O = sphing-4-enine + octadecanoate. The enzyme catalyses sphinganine + hexadecanoate = N-hexadecanoylsphinganine + H2O. The catalysed reaction is N-(octadecanoyl)-sphinganine + H2O = sphinganine + octadecanoate. Its pathway is lipid metabolism; sphingolipid metabolism. The reverse reaction is inhibited by Zn(2+) and Cu(2+). Inhibited by cardiolipin and phosphatidic acid. Plasma membrane ceramidase that hydrolyzes sphingolipid ceramides into sphingosine and free fatty acids at neutral pH. Ceramides, sphingosine, and its phosphorylated form sphingosine-1-phosphate are bioactive lipids that mediate cellular signaling pathways regulating several biological processes including cell proliferation, apoptosis and differentiation. Also catalyzes the reverse reaction allowing the synthesis of ceramides from fatty acids and sphingosine. Together with sphingomyelinase, participates in the production of sphingosine and sphingosine-1-phosphate from the degradation of sphingomyelin, a sphingolipid enriched in the plasma membrane of cells. Also participates in the hydrolysis of ceramides from the extracellular milieu allowing the production of sphingosine-1-phosphate inside and outside cells. This is the case for instance with the digestion of dietary sphingolipids in the intestinal tract. This is Neutral ceramidase (Asah2) from Rattus norvegicus (Rat).